The sequence spans 742 residues: Photosystem I P700 chlorophyll a apoprotein A2 2 (742 aa).

8 helical membrane-spanning segments follow: residues 46-69 (IFAT…FHVA), 135-158 (LYQG…LHLQ), 175-199 (LNHH…HVAI), 273-291 (MAHH…GHMY), 334-357 (LHFQ…QHMY), 373-399 (AALY…IFWI), 421-443 (AIIS…IYVH), and 524-542 (FLVH…LICV). The [4Fe-4S] cluster site is built by Cys-566 and Cys-575. Transmembrane regions (helical) follow at residues 583–604 (SFYL…YWHW) and 651–673 (LSVW…MFLI). Positions 662, 670, and 678 each coordinate chlorophyll a. Trp-679 lines the phylloquinone pocket. A helical membrane pass occupies residues 715 to 735 (LVGLAHFTVGYILTYAAFLIA).

It belongs to the PsaA/PsaB family. As to quaternary structure, the PsaA/B heterodimer binds the P700 chlorophyll special pair and subsequent electron acceptors. PSI consists of a core antenna complex that captures photons, and an electron transfer chain that converts photonic excitation into a charge separation. The cyanobacterial PSI reaction center is composed of one copy each of PsaA,B,C,D,E,F,I,J,K,L,M and X, and forms trimeric complexes. PSI electron transfer chain: 5 chlorophyll a, 1 chlorophyll a', 2 phylloquinones and 3 4Fe-4S clusters. PSI core antenna: 90 chlorophyll a, 22 carotenoids, 3 phospholipids and 1 galactolipid. P700 is a chlorophyll a/chlorophyll a' dimer, A0 is one or more chlorophyll a, A1 is one or both phylloquinones and FX is a shared 4Fe-4S iron-sulfur center. is required as a cofactor.

It localises to the cellular thylakoid membrane. It catalyses the reaction reduced [plastocyanin] + hnu + oxidized [2Fe-2S]-[ferredoxin] = oxidized [plastocyanin] + reduced [2Fe-2S]-[ferredoxin]. PsaA and PsaB bind P700, the primary electron donor of photosystem I (PSI), as well as the electron acceptors A0, A1 and FX. PSI is a plastocyanin/cytochrome c6-ferredoxin oxidoreductase, converting photonic excitation into a charge separation, which transfers an electron from the donor P700 chlorophyll pair to the spectroscopically characterized acceptors A0, A1, FX, FA and FB in turn. Oxidized P700 is reduced on the lumenal side of the thylakoid membrane by plastocyanin or cytochrome c6. The sequence is that of Photosystem I P700 chlorophyll a apoprotein A2 2 (psaB2) from Nostoc sp. (strain PCC 7120 / SAG 25.82 / UTEX 2576).